The following is a 141-amino-acid chain: Large ribosomal subunit protein uL11 (141 aa).

It belongs to the universal ribosomal protein uL11 family. As to quaternary structure, part of the ribosomal stalk of the 50S ribosomal subunit. Interacts with L10 and the large rRNA to form the base of the stalk. L10 forms an elongated spine to which L12 dimers bind in a sequential fashion forming a multimeric L10(L12)X complex. One or more lysine residues are methylated.

Functionally, forms part of the ribosomal stalk which helps the ribosome interact with GTP-bound translation factors. The polypeptide is Large ribosomal subunit protein uL11 (Lactobacillus delbrueckii subsp. bulgaricus (strain ATCC 11842 / DSM 20081 / BCRC 10696 / JCM 1002 / NBRC 13953 / NCIMB 11778 / NCTC 12712 / WDCM 00102 / Lb 14)).